Reading from the N-terminus, the 381-residue chain is Chaperone protein DnaJ (381 aa).

The J domain maps to 5-69; it reads DYYEVLGVSK…EKRARYDRFG (65 aa). The CR-type zinc finger occupies 136-218; the sequence is GKETEIEVPH…CGGTGHVKKR (83 aa). Zn(2+) contacts are provided by cysteine 149, cysteine 152, cysteine 166, cysteine 169, cysteine 192, cysteine 195, cysteine 206, and cysteine 209. CXXCXGXG motif repeat units follow at residues 149-156, 166-173, 192-199, and 206-213; these read CDTCHGSG, CPHCHGSG, CPVCGGTG, and CPTCGGTG. The interval 154-174 is disordered; the sequence is GSGAKPGTSPQSCPHCHGSGQ.

This sequence belongs to the DnaJ family. In terms of assembly, homodimer. Requires Zn(2+) as cofactor.

Its subcellular location is the cytoplasm. Its function is as follows. Participates actively in the response to hyperosmotic and heat shock by preventing the aggregation of stress-denatured proteins and by disaggregating proteins, also in an autonomous, DnaK-independent fashion. Unfolded proteins bind initially to DnaJ; upon interaction with the DnaJ-bound protein, DnaK hydrolyzes its bound ATP, resulting in the formation of a stable complex. GrpE releases ADP from DnaK; ATP binding to DnaK triggers the release of the substrate protein, thus completing the reaction cycle. Several rounds of ATP-dependent interactions between DnaJ, DnaK and GrpE are required for fully efficient folding. Also involved, together with DnaK and GrpE, in the DNA replication of plasmids through activation of initiation proteins. The protein is Chaperone protein DnaJ of Geobacillus thermodenitrificans (strain NG80-2).